Consider the following 334-residue polypeptide: MIPNPTRDAPNIPSFVAADVGGTHVRVSVVAAAPTCASPPQLLDVRTYRCADYPSLSTILNDFLGTRSAVRDCVIASAGFQRSDGTVITTNLPWPLSPHRLRADLDLAEVSLVNDFEALAYATEDMEAAQLLHLTGPAKAQDGPRLLLGPGTGLGAALWIPNNGRPIVLPTEAGQAALPSTTELEMQLVRHMLNNRTHVPIEHALSGPGILNVYRALCALQSVLPQHASPDAISHAAAAGTDMLSSQTLEVFCDFLGSIVGDLVMMYGAQGGVYLAGGILPQLREPLLRSHFVERFLNKGPMGEALQHVPVRLIEHGQLGIVGAARWYLNKKAT.

Residue 18–23 coordinates ATP; sequence ADVGGT.

The protein belongs to the bacterial glucokinase family.

The polypeptide is Glucokinase-like protein XF_1460 (Xylella fastidiosa (strain 9a5c)).